We begin with the raw amino-acid sequence, 448 residues long: Exodeoxyribonuclease 7 large subunit (448 aa).

The protein belongs to the XseA family. As to quaternary structure, heterooligomer composed of large and small subunits.

The protein resides in the cytoplasm. The catalysed reaction is Exonucleolytic cleavage in either 5'- to 3'- or 3'- to 5'-direction to yield nucleoside 5'-phosphates.. Functionally, bidirectionally degrades single-stranded DNA into large acid-insoluble oligonucleotides, which are then degraded further into small acid-soluble oligonucleotides. The sequence is that of Exodeoxyribonuclease 7 large subunit from Alcanivorax borkumensis (strain ATCC 700651 / DSM 11573 / NCIMB 13689 / SK2).